Here is a 156-residue protein sequence, read N- to C-terminus: Putative type II restriction enzyme ApeKORF2002P (156 aa).

The protein to M.jannaschii MJ1199.

It catalyses the reaction Endonucleolytic cleavage of DNA to give specific double-stranded fragments with terminal 5'-phosphates.. A putative type II restriction enzyme, its methylase would be APE_2002. The polypeptide is Putative type II restriction enzyme ApeKORF2002P (Aeropyrum pernix (strain ATCC 700893 / DSM 11879 / JCM 9820 / NBRC 100138 / K1)).